Here is a 499-residue protein sequence, read N- to C-terminus: Probable cytosol aminopeptidase (499 aa).

Mn(2+) is bound by residues Lys263 and Asp268. Lys275 is a catalytic residue. Mn(2+) is bound by residues Asp286, Asp345, and Glu347. Arg349 is a catalytic residue.

This sequence belongs to the peptidase M17 family. It depends on Mn(2+) as a cofactor.

Its subcellular location is the cytoplasm. It carries out the reaction Release of an N-terminal amino acid, Xaa-|-Yaa-, in which Xaa is preferably Leu, but may be other amino acids including Pro although not Arg or Lys, and Yaa may be Pro. Amino acid amides and methyl esters are also readily hydrolyzed, but rates on arylamides are exceedingly low.. It catalyses the reaction Release of an N-terminal amino acid, preferentially leucine, but not glutamic or aspartic acids.. Its function is as follows. Presumably involved in the processing and regular turnover of intracellular proteins. Catalyzes the removal of unsubstituted N-terminal amino acids from various peptides. The protein is Probable cytosol aminopeptidase of Bradyrhizobium sp. (strain BTAi1 / ATCC BAA-1182).